We begin with the raw amino-acid sequence, 156 residues long: Ribosomal RNA large subunit methyltransferase H (156 aa).

S-adenosyl-L-methionine contacts are provided by residues Leu-73, Gly-104, and 123-128; that span reads LSPLTL.

Belongs to the RNA methyltransferase RlmH family. In terms of assembly, homodimer.

Its subcellular location is the cytoplasm. The catalysed reaction is pseudouridine(1915) in 23S rRNA + S-adenosyl-L-methionine = N(3)-methylpseudouridine(1915) in 23S rRNA + S-adenosyl-L-homocysteine + H(+). Its function is as follows. Specifically methylates the pseudouridine at position 1915 (m3Psi1915) in 23S rRNA. This is Ribosomal RNA large subunit methyltransferase H from Sodalis glossinidius (strain morsitans).